Consider the following 486-residue polypeptide: MTTPHLDSAQDIDLSRVHLIGIGGAGMSGVARILLARGKTVTGSDAKDSRTLLPLRAVGATIAVGHAAENLELSGELPTVVVTSFAAIPQDNPELVRAREEGIPVIRRSDLLGELLEGSTQVLIAGTHGKTSTTSMSVVAMQAAGMDPSFAIGGQLNKAGTNAHHGTGEVFIAEADESDASLLRYKPNVAVVTNVEPDHLDFFKTPEAYFQVFDDFAGRITPNGKLVVCLNDPHAAELGERSVRKGIKTVGYGTADAVQAHPEVPAMATIVDSQVVAEGTRATINIDGQEVSVILQIPGDHMVLNGAAALLAGYLVGGDVDKLVEGLSDFSGVRRRFEFHGAIEGGKFNGAAIYDDYAHHPTEVTAVLSAARTRVKAAGKGRVIVAFQPHLYSRTIEFQKEFAEALSLADAAVVLEIYGAREQPVDGVSSEIITDAMTIPVVYEPNFSAVPERIAEIAGPNDIVLTMGAGSVTMLAPEILDQLQNN.

Glycine 126–serine 132 is a binding site for ATP.

This sequence belongs to the MurCDEF family.

The protein localises to the cytoplasm. The enzyme catalyses UDP-N-acetyl-alpha-D-muramate + L-alanine + ATP = UDP-N-acetyl-alpha-D-muramoyl-L-alanine + ADP + phosphate + H(+). Its pathway is cell wall biogenesis; peptidoglycan biosynthesis. Cell wall formation. The polypeptide is UDP-N-acetylmuramate--L-alanine ligase (Corynebacterium glutamicum (strain ATCC 13032 / DSM 20300 / JCM 1318 / BCRC 11384 / CCUG 27702 / LMG 3730 / NBRC 12168 / NCIMB 10025 / NRRL B-2784 / 534)).